The chain runs to 250 residues: 5'-nucleotidase SurE (250 aa).

A divalent metal cation is bound by residues Asp-8, Asp-9, Ser-39, and Asn-91.

This sequence belongs to the SurE nucleotidase family. A divalent metal cation is required as a cofactor.

The protein resides in the cytoplasm. The enzyme catalyses a ribonucleoside 5'-phosphate + H2O = a ribonucleoside + phosphate. Functionally, nucleotidase that shows phosphatase activity on nucleoside 5'-monophosphates. This chain is 5'-nucleotidase SurE, found in Leptospira borgpetersenii serovar Hardjo-bovis (strain JB197).